Consider the following 31-residue polypeptide: Sarcolipin (31 aa).

Residues 1–7 are Cytoplasmic-facing; that stretch reads MGINTRE. A helical membrane pass occupies residues 8-26; sequence LFLNFTIVLITVILMWLLV. At 27–31 the chain is on the lumenal side; it reads RSYQY.

This sequence belongs to the sarcolipin family. Homooligomer. Can also form heterooligomers with other sarcoplasmic/endoplasmic reticulum calcium ATPase (SERCA) regulators ARLN, ERLN, PLN and STRIT1/DWORF. Monomer. Interacts with calcium ATPase ATP2A1/SERCA1. Interacts as a monomer with ATP2A2/SERCA2; the interaction decreases ATP2A2 Ca(2+) affinity. Interacts with VMP1; VMP1 competes with PLN and SLN to prevent them from forming an inhibitory complex with ATP2A2.

It is found in the sarcoplasmic reticulum membrane. The protein resides in the endoplasmic reticulum membrane. In terms of biological role, reversibly inhibits the activity of ATP2A1/SERCA1 and ATP2A2/SERCA2 in sarcoplasmic reticulum by decreasing the apparent affinity of the ATPase for Ca(2+). Also inhibits the activity of ATP2A3/SERCA3. Modulates calcium re-uptake during muscle relaxation and plays an important role in calcium homeostasis in muscle. Required for muscle-based, non-shivering thermogenesis. This is Sarcolipin from Homo sapiens (Human).